Reading from the N-terminus, the 651-residue chain is Probable inactive purple acid phosphatase 9 (651 aa).

Residues 1–20 form the signal peptide; sequence MIAAVYTLFFFFLLISSVYS. N-linked (GlcNAc...) asparagine glycosylation is found at Asn32, Asn96, and Asn202. Residues Asp305 and Tyr308 each contribute to the Fe cation site. Asp305 contacts Zn(2+). Residue Asn338 participates in Zn(2+) binding. Residue Asn338 coordinates substrate. 2 N-linked (GlcNAc...) asparagine glycosylation sites follow: Asn378 and Asn432. Zn(2+) is bound at residue His444. N-linked (GlcNAc...) asparagine glycosylation occurs at Asn475. His483 lines the Zn(2+) pocket. 483 to 485 is a substrate binding site; that stretch reads HVH. His485 lines the Fe cation pocket. N-linked (GlcNAc...) asparagine glycans are attached at residues Asn495 and Asn640.

The protein belongs to the metallophosphoesterase superfamily. Purple acid phosphatase family. In terms of assembly, homodimer. Requires Fe cation as cofactor. The cofactor is Zn(2+). Expressed in roots, stems, leaves, flowers and siliques.

The protein resides in the secreted. This chain is Probable inactive purple acid phosphatase 9 (PAP9), found in Arabidopsis thaliana (Mouse-ear cress).